The chain runs to 121 residues: SLLEFGKMILEETGKLAIPSYSSYGCYCGWGGKGTPKDATDRCCFVHDCCYGNLPDCNNKSKRYRYKKVNGAIVCEKGTSCENRICECDKAAAICFRQNLNTYSKKYMLYPDFLCKGELVC.

Disulfide bonds link cysteine 26-cysteine 115, cysteine 28-cysteine 44, cysteine 43-cysteine 95, cysteine 49-cysteine 121, cysteine 50-cysteine 88, cysteine 57-cysteine 81, and cysteine 75-cysteine 86. Ca(2+) contacts are provided by tyrosine 27, glycine 29, and glycine 31. Histidine 47 is a catalytic residue. Residue aspartate 48 coordinates Ca(2+). Residue aspartate 89 is part of the active site.

Ca(2+) serves as cofactor. As to expression, expressed by the venom gland.

It is found in the secreted. It carries out the reaction a 1,2-diacyl-sn-glycero-3-phosphocholine + H2O = a 1-acyl-sn-glycero-3-phosphocholine + a fatty acid + H(+). Snake venom phospholipase A2 (PLA2) that exhibits anticoagulant activity, probably by binding to factor X and its activated form factor Xa (F10). Shows no cytotoxicity. PLA2 catalyzes the calcium-dependent hydrolysis of the 2-acyl groups in 3-sn-phosphoglycerides. This is Basic phospholipase A2 daboxin P from Daboia russelii (Russel's viper).